A 477-amino-acid chain; its full sequence is Pyruvate kinase (477 aa).

R34 is a substrate binding site. Residues N36, D64, and T65 each coordinate K(+). 36 to 39 (NTAH) lines the ATP pocket. ATP-binding residues include R71 and K150. Mg(2+) is bound at residue E216. The substrate site is built by G239, D240, and T272. D240 provides a ligand contact to Mg(2+).

This sequence belongs to the pyruvate kinase family. In terms of assembly, homotetramer. Mg(2+) is required as a cofactor. It depends on K(+) as a cofactor.

The enzyme catalyses pyruvate + ATP = phosphoenolpyruvate + ADP + H(+). It functions in the pathway carbohydrate degradation; glycolysis; pyruvate from D-glyceraldehyde 3-phosphate: step 5/5. This is Pyruvate kinase (pyk) from Borreliella burgdorferi (strain ATCC 35210 / DSM 4680 / CIP 102532 / B31) (Borrelia burgdorferi).